A 119-amino-acid polypeptide reads, in one-letter code: Large ribosomal subunit protein uL18 (119 aa).

This sequence belongs to the universal ribosomal protein uL18 family. As to quaternary structure, part of the 50S ribosomal subunit; part of the 5S rRNA/L5/L18/L25 subcomplex. Contacts the 5S and 23S rRNAs.

Its function is as follows. This is one of the proteins that bind and probably mediate the attachment of the 5S RNA into the large ribosomal subunit, where it forms part of the central protuberance. This chain is Large ribosomal subunit protein uL18, found in Clostridium botulinum (strain Okra / Type B1).